A 370-amino-acid polypeptide reads, in one-letter code: Homospermidine synthase 2 (370 aa).

The protein belongs to the deoxyhypusine synthase family. Homotetramer. The cofactor is NAD(+). In terms of processing, the N-terminus is blocked. In terms of tissue distribution, expressed in roots.

It catalyses the reaction putrescine + spermidine = sym-homospermidine + propane-1,3-diamine. The protein operates within alkaloid biosynthesis; pyrrolizidine alkaloid biosynthesis. Its function is as follows. Catalyzes the transfer of an aminobutyl unit from spermidine onto putrescine. The resulting polyamine homospermidine is a precursor in the biosynthesis of pyrrolizidine alkaloids. This is Homospermidine synthase 2 from Senecio vernalis (Spring groundsel).